The chain runs to 172 residues: Endoribonuclease YbeY (172 aa).

Residues histidine 136, histidine 140, and histidine 146 each contribute to the Zn(2+) site.

It belongs to the endoribonuclease YbeY family. The cofactor is Zn(2+).

The protein resides in the cytoplasm. In terms of biological role, single strand-specific metallo-endoribonuclease involved in late-stage 70S ribosome quality control and in maturation of the 3' terminus of the 16S rRNA. The protein is Endoribonuclease YbeY of Rickettsia canadensis (strain McKiel).